Here is a 369-residue protein sequence, read N- to C-terminus: tRNA-specific 2-thiouridylase MnmA (369 aa).

Residues 11 to 18 (GMSGGVDS) and Met-37 contribute to the ATP site. The tract at residues 97–99 (NPD) is interaction with target base in tRNA. Residue Cys-102 is the Nucleophile of the active site. Cys-102 and Cys-199 form a disulfide bridge. Position 127 (Gly-127) interacts with ATP. The interval 149–151 (KDQ) is interaction with tRNA. The Cysteine persulfide intermediate role is filled by Cys-199. The interval 311–312 (RY) is interaction with tRNA.

This sequence belongs to the MnmA/TRMU family. In terms of assembly, interacts with TusE.

Its subcellular location is the cytoplasm. The catalysed reaction is S-sulfanyl-L-cysteinyl-[protein] + uridine(34) in tRNA + AH2 + ATP = 2-thiouridine(34) in tRNA + L-cysteinyl-[protein] + A + AMP + diphosphate + H(+). Catalyzes the 2-thiolation of uridine at the wobble position (U34) of tRNA(Lys), tRNA(Glu) and tRNA(Gln), leading to the formation of s(2)U34, the first step of tRNA-mnm(5)s(2)U34 synthesis. Sulfur is provided by IscS, via a sulfur-relay system. Binds ATP and its substrate tRNAs. The polypeptide is tRNA-specific 2-thiouridylase MnmA (Enterobacter sp. (strain 638)).